A 65-amino-acid polypeptide reads, in one-letter code: Large ribosomal subunit protein bL33c (65 aa).

Belongs to the bacterial ribosomal protein bL33 family.

It localises to the plastid. The protein resides in the chloroplast. The sequence is that of Large ribosomal subunit protein bL33c from Zygnema circumcarinatum (Green alga).